The primary structure comprises 188 residues: Methylamine dehydrogenase light chain (188 aa).

Residues 1–57 (MLGNFRFDDMVEKLSRRVAGRTSRRGAIGRLGTVLAGAALVPLLPVDRRGRVSRANA) constitute a signal peptide (tat-type signal). 6 cysteine pairs are disulfide-bonded: cysteine 80–cysteine 145, cysteine 86–cysteine 118, cysteine 93–cysteine 178, cysteine 95–cysteine 143, cysteine 103–cysteine 134, and cysteine 135–cysteine 166. Tryptophan 114 carries the post-translational modification Tryptophylquinone. Residues 114-165 (WVASCYNPTDGQSYLIAYRDCCGYNVSGRCPCLNTEGELPVYRPEFANDIIW) constitute a cross-link (tryptophan tryptophylquinone (Trp-Trp)).

The protein belongs to the aromatic amine dehydrogenase light chain family. In terms of assembly, heterotetramer of two light and two heavy chains. Tryptophan tryptophylquinone residue is required as a cofactor. Predicted to be exported by the Tat system. The position of the signal peptide cleavage has been experimentally proven. Post-translationally, tryptophan tryptophylquinone (TTQ) is formed by oxidation of the indole ring of a tryptophan to form tryptophylquinone followed by covalent cross-linking with another tryptophan residue.

The protein localises to the periplasm. The catalysed reaction is 2 oxidized [amicyanin] + methylamine + H2O = 2 reduced [amicyanin] + formaldehyde + NH4(+) + 2 H(+). The protein operates within one-carbon metabolism; methylamine degradation; formaldehyde from methylamine: step 1/1. Functionally, methylamine dehydrogenase carries out the oxidation of methylamine. Electrons are passed from methylamine dehydrogenase to amicyanin. This chain is Methylamine dehydrogenase light chain (mauA), found in Paracoccus versutus (Thiobacillus versutus).